Reading from the N-terminus, the 302-residue chain is Oxaloacetate decarboxylase 2 (302 aa).

Serine 50 is a binding site for substrate. Aspartate 88 lines the Mg(2+) pocket. Residues arginine 159 and histidine 235 each coordinate substrate.

It belongs to the isocitrate lyase/PEP mutase superfamily. Oxaloacetate decarboxylase family. Homotetramer; dimer of dimers. The cofactor is Mg(2+).

The enzyme catalyses oxaloacetate + H(+) = pyruvate + CO2. Functionally, catalyzes the decarboxylation of oxaloacetate into pyruvate. Seems to play a role in maintaining cellular concentrations of bicarbonate and pyruvate. This chain is Oxaloacetate decarboxylase 2, found in Pseudomonas putida (strain W619).